Reading from the N-terminus, the 115-residue chain is Methylmalonyl-CoA decarboxylase subunit delta (115 aa).

Residues 11–31 traverse the membrane as a helical segment; it reads WLIMAINMTVVFAVLIALGIL. The segment at 46-70 is disordered; the sequence is EAPAATAPVATPTATPVAPANASAQ. A compositionally biased stretch (low complexity) spans 48 to 65; the sequence is PAATAPVATPTATPVAPA.

Belongs to the OadG family. The methylmalonyl-CoA decarboxylase is composed of five subunits: the carboxyltransferase alpha subunit (MmdA), the tunnel beta subunit (MmdB), the biotin-containing gamma subunit (MmdC), and the delta (MmdD) and epsilon (MmdE) subunits. Post-translationally, the N-terminus is blocked.

It is found in the cell membrane. It carries out the reaction (S)-methylmalonyl-CoA + Na(+)(in) + H(+)(out) = propanoyl-CoA + Na(+)(out) + CO2. Its activity is regulated as follows. Completely inhibited by avidin. Functionally, subunit of the sodium ion pump methylmalonyl-CoA decarboxylase, which converts the chemical energy of a decarboxylation reaction into an electrochemical gradient of Na(+) ions across the cytoplasmic membrane, thereby creating a sodium ion motive force that is used for ATP synthesis. The delta subunit is required for catalytic activity as well as for the proper assembly of the individual subunits to an enzyme complex. Can also convert malonyl-CoA into acetyl-CoA. This chain is Methylmalonyl-CoA decarboxylase subunit delta, found in Veillonella parvula (Staphylococcus parvulus).